Reading from the N-terminus, the 590-residue chain is ATP-dependent lipid A-core flippase (590 aa).

6 helical membrane-spanning segments follow: residues 31–51 (IFIA…VIPK), 74–94 (AILT…GYLL), 132–152 (AVIF…ITLV), 159–179 (VALL…VSVI), 259–279 (VTAF…MIQA), and 286–306 (IGGF…LKHL). In terms of domain architecture, ABC transmembrane type-1 spans 33–315 (IAAILAMAVV…LTDINQPLTR (283 aa)). Residues 347-585 (LVFERVGFRY…NGLYAGLHRI (239 aa)) form the ABC transporter domain. Position 381 to 388 (381 to 388 (GPSGSGKT)) interacts with ATP.

The protein belongs to the ABC transporter superfamily. Lipid exporter (TC 3.A.1.106) family. As to quaternary structure, homodimer.

It localises to the cell inner membrane. It carries out the reaction ATP + H2O + lipid A-core oligosaccharideSide 1 = ADP + phosphate + lipid A-core oligosaccharideSide 2.. In terms of biological role, involved in lipopolysaccharide (LPS) biosynthesis. Translocates lipid A-core from the inner to the outer leaflet of the inner membrane. Transmembrane domains (TMD) form a pore in the inner membrane and the ATP-binding domain (NBD) is responsible for energy generation. The sequence is that of ATP-dependent lipid A-core flippase from Cupriavidus pinatubonensis (strain JMP 134 / LMG 1197) (Cupriavidus necator (strain JMP 134)).